A 121-amino-acid polypeptide reads, in one-letter code: Large ribosomal subunit protein uL14 (121 aa).

It belongs to the universal ribosomal protein uL14 family. Part of the 50S ribosomal subunit. Forms a cluster with proteins L3 and L19. In the 70S ribosome, L14 and L19 interact and together make contacts with the 16S rRNA in bridges B5 and B8.

Binds to 23S rRNA. Forms part of two intersubunit bridges in the 70S ribosome. This is Large ribosomal subunit protein uL14 from Synechococcus sp. (strain CC9605).